The sequence spans 366 residues: MDFLNSSDQNLTSEELLHRMPSKILVSLTLSGLALMTTTINSLVIAAIIVTRKLHHPANYLICSLAVTDFLVAVLVMPFSIVYIVRESWIMGQVLCDIWLSVDIICCTCSILHLSAIALDRYRAITDAVEYARKRTPKQAGIMITIVWIISVFISMPPLFWRHQGTSRDDECIIKHDHIVSTIYSTFGAFYIPLVLILILYYKIYKAAKTLYHKRQASRIAKEELNGQVLLESGEKSIKMVSTTYVPEKSLSDPSTDFDKIHNTVKSPRCKLRHEKSWRRQKISGTRERKAATTLGLILGAFVICWLPFFVKELVVNVCEKCKISEEMANFLAWLGYLNSLINPLIYTIFNEDFKKAFQKLVRCQY.

The Extracellular portion of the chain corresponds to 1–24 (MDFLNSSDQNLTSEELLHRMPSKI). N-linked (GlcNAc...) asparagine glycosylation is found at Asn5 and Asn10. The chain crosses the membrane as a helical span at residues 25–49 (LVSLTLSGLALMTTTINSLVIAAII). Residues 50–59 (VTRKLHHPAN) are Cytoplasmic-facing. Residues 60–81 (YLICSLAVTDFLVAVLVMPFSI) traverse the membrane as a helical segment. Residues 82 to 96 (VYIVRESWIMGQVLC) lie on the Extracellular side of the membrane. Cysteines 96 and 172 form a disulfide. A helical transmembrane segment spans residues 97 to 119 (DIWLSVDIICCTCSILHLSAIAL). Residues Asp103 and Cys107 each contribute to the serotonin site. Positions 120-122 (DRY) match the DRY motif; important for ligand-induced conformation changes motif. Over 120–139 (DRYRAITDAVEYARKRTPKQ) the chain is Cytoplasmic. A helical transmembrane segment spans residues 140-159 (AGIMITIVWIISVFISMPPL). Over 160–178 (FWRHQGTSRDDECIIKHDH) the chain is Extracellular. A helical transmembrane segment spans residues 179-202 (IVSTIYSTFGAFYIPLVLILILYY). Over 203–291 (KIYKAAKTLY…KISGTRERKA (89 aa)) the chain is Cytoplasmic. The chain crosses the membrane as a helical span at residues 292–315 (ATTLGLILGAFVICWLPFFVKELV). Topologically, residues 316–327 (VNVCEKCKISEE) are extracellular. A helical transmembrane segment spans residues 328–350 (MANFLAWLGYLNSLINPLIYTIF). Positions 343–347 (NPLIY) match the NPxxY motif; important for ligand-induced conformation changes and signaling motif. Over 351 to 366 (NEDFKKAFQKLVRCQY) the chain is Cytoplasmic.

It belongs to the G-protein coupled receptor 1 family.

It localises to the cell membrane. In terms of biological role, G-protein coupled receptor for 5-hydroxytryptamine (serotonin). Also functions as a receptor for various alkaloids and psychoactive substances. Ligand binding causes a conformation change that triggers signaling via guanine nucleotide-binding proteins (G proteins) and modulates the activity of downstream effectors, such as adenylate cyclase. HTR1F is coupled to G(i)/G(o) G alpha proteins and mediates inhibitory neurotransmission by inhibiting adenylate cyclase activity. The protein is 5-hydroxytryptamine receptor 1F (HTR1F) of Cavia porcellus (Guinea pig).